A 664-amino-acid polypeptide reads, in one-letter code: DNA ligase (664 aa).

Residues 31–35, 80–81, and Glu110 contribute to the NAD(+) site; these read DYEFD and SL. Catalysis depends on Lys112, which acts as the N6-AMP-lysine intermediate. NAD(+)-binding residues include Arg133 and Glu169. The region spanning 237-257 is the BRCT 1 domain; sequence LEKARKWGFKVPAESELKDSI. The NAD(+) site is built by Lys284 and Lys308. Zn(2+) contacts are provided by Cys402, Cys405, Cys420, and Cys426. The BRCT 2 domain maps to 586 to 664; the sequence is NQTNILEGNT…SEEDFLKMLE (79 aa).

The protein belongs to the NAD-dependent DNA ligase family. LigA subfamily. The cofactor is Mg(2+). Mn(2+) is required as a cofactor.

It carries out the reaction NAD(+) + (deoxyribonucleotide)n-3'-hydroxyl + 5'-phospho-(deoxyribonucleotide)m = (deoxyribonucleotide)n+m + AMP + beta-nicotinamide D-nucleotide.. Functionally, DNA ligase that catalyzes the formation of phosphodiester linkages between 5'-phosphoryl and 3'-hydroxyl groups in double-stranded DNA using NAD as a coenzyme and as the energy source for the reaction. It is essential for DNA replication and repair of damaged DNA. The polypeptide is DNA ligase (Christiangramia forsetii (strain DSM 17595 / CGMCC 1.15422 / KT0803) (Gramella forsetii)).